A 235-amino-acid chain; its full sequence is Phosphoribosylaminoimidazole-succinocarboxamide synthase (235 aa).

The protein belongs to the SAICAR synthetase family.

It carries out the reaction 5-amino-1-(5-phospho-D-ribosyl)imidazole-4-carboxylate + L-aspartate + ATP = (2S)-2-[5-amino-1-(5-phospho-beta-D-ribosyl)imidazole-4-carboxamido]succinate + ADP + phosphate + 2 H(+). Its pathway is purine metabolism; IMP biosynthesis via de novo pathway; 5-amino-1-(5-phospho-D-ribosyl)imidazole-4-carboxamide from 5-amino-1-(5-phospho-D-ribosyl)imidazole-4-carboxylate: step 1/2. The chain is Phosphoribosylaminoimidazole-succinocarboxamide synthase from Streptococcus thermophilus (strain CNRZ 1066).